A 410-amino-acid polypeptide reads, in one-letter code: Cathepsin D (410 aa).

A signal peptide spans 1–18; sequence MQPPSLLLLVLGLLAAPA. The propeptide at 19-64 is activation peptide; that stretch reads AALVRIPLHKFTSVRRTMTELGGPVEDLIAKGPISKYAQGAPAVTG. One can recognise a Peptidase A1 domain in the interval 79–405; the sequence is YYGEIGIGTP…DRDQNRVGLA (327 aa). 2 disulfide bridges follow: cysteine 91-cysteine 160 and cysteine 110-cysteine 117. Aspartate 97 is a catalytic residue. Asparagine 134 and asparagine 261 each carry an N-linked (GlcNAc...) asparagine glycan. Residues cysteine 284 and cysteine 288 are joined by a disulfide bond. The active site involves aspartate 293. The cysteines at positions 327 and 364 are disulfide-linked.

This sequence belongs to the peptidase A1 family. In terms of assembly, consists of a light chain and a heavy chain. Interacts with ADAM30; this leads to activation of CTSD. Interacts with GRN; stabilizes CTSD; increases its proteolytic activity. Post-translationally, N- and O-glycosylated. In terms of processing, undergoes proteolytic cleavage and activation by ADAM30.

It localises to the lysosome. The protein resides in the melanosome. Its subcellular location is the secreted. The protein localises to the extracellular space. It carries out the reaction Specificity similar to, but narrower than, that of pepsin A. Does not cleave the 4-Gln-|-His-5 bond in B chain of insulin.. Functionally, acid protease active in intracellular protein breakdown. Plays a role in APP processing following cleavage and activation by ADAM30 which leads to APP degradation. The sequence is that of Cathepsin D (CTSD) from Canis lupus familiaris (Dog).